Here is a 294-residue protein sequence, read N- to C-terminus: Ribosomal protein L11 methyltransferase (294 aa).

S-adenosyl-L-methionine contacts are provided by Thr146, Gly167, Asp189, and Asn231.

It belongs to the methyltransferase superfamily. PrmA family.

It is found in the cytoplasm. The catalysed reaction is L-lysyl-[protein] + 3 S-adenosyl-L-methionine = N(6),N(6),N(6)-trimethyl-L-lysyl-[protein] + 3 S-adenosyl-L-homocysteine + 3 H(+). In terms of biological role, methylates ribosomal protein L11. This is Ribosomal protein L11 methyltransferase from Aliivibrio fischeri (strain ATCC 700601 / ES114) (Vibrio fischeri).